Here is a 220-residue protein sequence, read N- to C-terminus: MKNTPEVKASPQTGYRIPGYLLVVYALLLFTLGWFGHQRWADISPIPLSTSAAAIAAPPTKVGMVPASTAVTADENHPGSLHAAAENSATQTAASGSQTSASSQEATPDTKPAKLVTGWQTAKPGELPYIAFSAHVYTSAPDKRSVTLNGERYREGDSPYQGLVIEQIEQDMVIFSFNGEPFILDSLQDWPGGKPGDDAAQGNEQEPTSKPEQTVRTTKK.

Residues 17–37 (IPGYLLVVYALLLFTLGWFGH) traverse the membrane as a helical segment. Positions 85 to 107 (AENSATQTAASGSQTSASSQEAT) are enriched in low complexity. Disordered regions lie at residues 85–114 (AENS…KPAK) and 188–220 (QDWP…TTKK). Residues 202–220 (GNEQEPTSKPEQTVRTTKK) show a composition bias toward polar residues.

Belongs to the ExeB/OutB/PulB family.

It localises to the cell inner membrane. Functionally, out proteins are required for the translocation of pectate lyases and cellulases across the outer membrane. This chain is General secretion pathway protein B (outB), found in Dickeya dadantii (strain 3937) (Erwinia chrysanthemi (strain 3937)).